Consider the following 185-residue polypeptide: Small ribosomal subunit protein bS16 (185 aa).

Residues 83-185 (QWTHGNNPEK…APASEETTEG (103 aa)) are disordered. Positions 89–125 (NPEKAKPGKKAQERDAERTQRDADRVAAEAQAKEDAK) are enriched in basic and acidic residues. 2 stretches are compositionally biased toward low complexity: residues 126–146 (AAAA…AAAP) and 159–176 (VEAA…AEEA).

Belongs to the bacterial ribosomal protein bS16 family.

This is Small ribosomal subunit protein bS16 from Caulobacter sp. (strain K31).